The sequence spans 119 residues: Large ribosomal subunit protein uL18 (119 aa).

It belongs to the universal ribosomal protein uL18 family. Part of the 50S ribosomal subunit; part of the 5S rRNA/L5/L18/L25 subcomplex. Contacts the 5S and 23S rRNAs.

Functionally, this is one of the proteins that bind and probably mediate the attachment of the 5S RNA into the large ribosomal subunit, where it forms part of the central protuberance. The chain is Large ribosomal subunit protein uL18 from Xanthomonas axonopodis pv. citri (strain 306).